A 507-amino-acid polypeptide reads, in one-letter code: MDAFVVFSLAFLAAWFIVVFPRWSDSRRRRGPGGELPPGPPPLPIVGNILQLRGDPHKSFAQLAKTYGPLMSLRLGTQFAVVVSSPEMATEILQKHGHAFSNRSIPDAINIHGHNEVSWNTMPADSTGWKRIRRVGREKLFSHQALQQTEGQRQERLRKLADHVRGFSEQGRVMNVGEATFTTMTDLVFSTLFSIDLTDYGATDSIANKEFKEHVNAFTRYIGVPNISDFFPIFAPLDPQGIRRKIGHHLGSLLAFVQSMIEERLRERKASTYQKKNDFLDTLLDISEEGNGYDDLSIKEIRHFCVDIIVAGSDTSAATTEWAMVELLLHPDKLAKLKAELKSFLGEKSLVEGSDISKLPYLQATIKEVFRFHPAAPLLGPREAVEETQINGYTIPKNAKIMVNFWAMTRDPSIWKNPESFEPERFLGKDIDYEGQHFELIPFGSGRRICPGMPLASRMLHCMVATLCHNFDWELEGGAESKQRQREDVFGLALQKKFPLRAKPIKV.

A helical membrane pass occupies residues 6-23 (VFSLAFLAAWFIVVFPRW). Heme is bound at residue Cys450.

It belongs to the cytochrome P450 family. It depends on heme as a cofactor. Expressed in glandular trichomes of young leaves.

The protein resides in the membrane. It carries out the reaction 11-hydroxyferruginol + 3 reduced [NADPH--hemoprotein reductase] + 3 O2 = carnosate + 3 oxidized [NADPH--hemoprotein reductase] + 4 H2O + 4 H(+). It catalyses the reaction miltiradiene + 2 reduced [NADPH--hemoprotein reductase] + 2 O2 = miltiradien-20-al + 2 oxidized [NADPH--hemoprotein reductase] + 3 H2O + 2 H(+). The catalysed reaction is ferruginol + 3 reduced [NADPH--hemoprotein reductase] + 3 O2 = pisiferate + 3 oxidized [NADPH--hemoprotein reductase] + 4 H2O + 4 H(+). The protein operates within secondary metabolite biosynthesis; terpenoid biosynthesis. Its function is as follows. Monooxygenase involved in the biosynthesis of carnosate, a potent antioxidant labdane-related diterpene natural product. Catalyzes the oxidation of 11-hydroxyferruginol to produce carnosate. Mediates the conversion of miltiradien into miltiradien-20-al. Also involved in the production of pisiferic acid and derivative products from ferruginol. This is Carnosic acid synthase from Rosmarinus officinalis (Rosemary).